The following is a 390-amino-acid chain: Chorismate synthase (390 aa).

Positions 48 and 54 each coordinate NADP(+). FMN contacts are provided by residues 125–127 (RSS), 238–239 (NA), Gly278, 293–297 (KPTSS), and Arg319. The segment at 360-390 (KVPGNIINPTNPVTTQPDVRRAEDPEPDENS) is disordered. Residues 366–376 (INPTNPVTTQP) are compositionally biased toward polar residues.

This sequence belongs to the chorismate synthase family. Homotetramer. FMNH2 serves as cofactor.

It carries out the reaction 5-O-(1-carboxyvinyl)-3-phosphoshikimate = chorismate + phosphate. It functions in the pathway metabolic intermediate biosynthesis; chorismate biosynthesis; chorismate from D-erythrose 4-phosphate and phosphoenolpyruvate: step 7/7. Catalyzes the anti-1,4-elimination of the C-3 phosphate and the C-6 proR hydrogen from 5-enolpyruvylshikimate-3-phosphate (EPSP) to yield chorismate, which is the branch point compound that serves as the starting substrate for the three terminal pathways of aromatic amino acid biosynthesis. This reaction introduces a second double bond into the aromatic ring system. The polypeptide is Chorismate synthase (Nitrosomonas eutropha (strain DSM 101675 / C91 / Nm57)).